The following is a 671-amino-acid chain: MSAGNGNATNGDGGFSFPKGPVMPKITTGAAKRGSGVCHDDSGPTVNATTIDELHSLQKKRSAPTTPINQNAAAAFAAVSEEERQKIQLQSISASLASLTRESGPKVVRGDPAEKKTDGSTTPAYAHGQHHSIFSPATGAVSDSSLKFTHVLYNLSPAELYEQAIKYEKGSFITSNGALATLSGAKTGRAPRDKRVVRDATTEDELWWGKGSPNIEMDEHTFMVNRERAVDYLNSLEKVFVNDQYLNWDPENRIKVRIVSARAYHSLFMHNMCIRPTQEELESFGTPDFTIYNAGQFPCNRYTHYMTSSTSVDLNLARREMVILGTQYAGEMKKGLFSVMHYLMPKRRILSLHSGCNMGKDGDVALFFGLSGTGKTTLSTDHNRYLIGDDEHCWTETGVSNIEGGCYAKCVDLSREKEPDIWNAIKFGTVLENVVFDEHTREVDYSDKSVTENTRAAYPIEFIPNAKIPCVGPHPTNVILLACDAFGVLPPVSKLNLAQTMYHFISGYTALVAGTEDGIKEPTATFSACFGAAFIMLHPTKYAAMLAEKMKSQGATGWLVNTGWSGGSYGVGNRIKLAYTRKIIDAIHSGSLLKANYKKTEIFGFEIPTEIEGIPSEILDPVNSWSDKKAHKDTLVKLGGLFKKNFEVFANHKIGVDGKLTEEILAAGPIF.

Low complexity predominate over residues 1–10 (MSAGNGNATN). The tract at residues 1–44 (MSAGNGNATNGDGGFSFPKGPVMPKITTGAAKRGSGVCHDDSGP) is disordered. Ser-2 bears the N-acetylserine mark. Ser-62 is modified (phosphoserine). Thr-66 carries the phosphothreonine modification. The segment at 100 to 127 (TRESGPKVVRGDPAEKKTDGSTTPAYAH) is disordered. Residues 108 to 118 (VRGDPAEKKTD) show a composition bias toward basic and acidic residues. Arg-189 contacts substrate. His-270 and Asn-271 together coordinate Ca(2+). Tyr-328 and Lys-334 together coordinate substrate. Residues Lys-334, His-353, and 369-377 (GLSGTGKTT) contribute to the ATP site. The Mn(2+) site is built by Lys-334 and His-353. Mn(2+) is bound at residue Asp-390. Ca(2+) is bound at residue Gly-404. Residues Glu-418, Arg-455, 574 to 575 (RI), Ile-575, and Thr-580 contribute to the ATP site. Arg-455 is a substrate binding site.

This sequence belongs to the phosphoenolpyruvate carboxykinase (ATP) family. As to quaternary structure, monomer. Requires Mn(2+) as cofactor. As to expression, expressed in cotyledons, flowers, siliques, seeds, leaves, stems and roots. Localized in mid-veins.

It is found in the cytoplasm. The enzyme catalyses oxaloacetate + ATP = phosphoenolpyruvate + ADP + CO2. It functions in the pathway carbohydrate biosynthesis; gluconeogenesis. Allosterically activated by calcium. It may represent the only case of a monomeric, allosteric enzyme. In terms of biological role, involved in the gluconeogenesis. Catalyzes the conversion of oxaloacetate (OAA) to phosphoenolpyruvate (PEP) through direct phosphoryl transfer between the nucleoside triphosphate and OAA. The polypeptide is Phosphoenolpyruvate carboxykinase (ATP) 1 (Arabidopsis thaliana (Mouse-ear cress)).